The primary structure comprises 186 residues: MISSNDFRTGTSIELDGSVWRVVEFLHVKPGKGSAFVRTKLKAVQSGSVVEKTFRAGEMLPQALLEKSTLQHTYMESGDYVFMDMSSYEETRLTAQQIGDSRKYLKEGMEVNVVSWNGNPLEVELPNSVVLEITETDPGVKGDTATGGTKPAILETGAQVMVPLFLSVGEKIKVDTRNDSYLGREN.

The protein belongs to the elongation factor P family.

The protein localises to the cytoplasm. The protein operates within protein biosynthesis; polypeptide chain elongation. Its function is as follows. Involved in peptide bond synthesis. Stimulates efficient translation and peptide-bond synthesis on native or reconstituted 70S ribosomes in vitro. Probably functions indirectly by altering the affinity of the ribosome for aminoacyl-tRNA, thus increasing their reactivity as acceptors for peptidyl transferase. This chain is Elongation factor P, found in Prochlorococcus marinus (strain MIT 9303).